Consider the following 309-residue polypeptide: Probable manganese-dependent inorganic pyrophosphatase (309 aa).

The Mn(2+) site is built by His9, Asp13, Asp15, Asp75, His97, and Asp149.

Belongs to the PPase class C family. Mn(2+) serves as cofactor.

The protein localises to the cytoplasm. The catalysed reaction is diphosphate + H2O = 2 phosphate + H(+). This chain is Probable manganese-dependent inorganic pyrophosphatase, found in Bacillus cereus (strain AH187).